The following is a 93-amino-acid chain: Pyrimidine/purine nucleoside phosphorylase (93 aa).

Belongs to the nucleoside phosphorylase PpnP family.

It catalyses the reaction a purine D-ribonucleoside + phosphate = a purine nucleobase + alpha-D-ribose 1-phosphate. It carries out the reaction adenosine + phosphate = alpha-D-ribose 1-phosphate + adenine. The catalysed reaction is cytidine + phosphate = cytosine + alpha-D-ribose 1-phosphate. The enzyme catalyses guanosine + phosphate = alpha-D-ribose 1-phosphate + guanine. It catalyses the reaction inosine + phosphate = alpha-D-ribose 1-phosphate + hypoxanthine. It carries out the reaction thymidine + phosphate = 2-deoxy-alpha-D-ribose 1-phosphate + thymine. The catalysed reaction is uridine + phosphate = alpha-D-ribose 1-phosphate + uracil. The enzyme catalyses xanthosine + phosphate = alpha-D-ribose 1-phosphate + xanthine. Catalyzes the phosphorolysis of diverse nucleosides, yielding D-ribose 1-phosphate and the respective free bases. Can use uridine, adenosine, guanosine, cytidine, thymidine, inosine and xanthosine as substrates. Also catalyzes the reverse reactions. The protein is Pyrimidine/purine nucleoside phosphorylase of Sorangium cellulosum (strain So ce56) (Polyangium cellulosum (strain So ce56)).